Consider the following 554-residue polypeptide: Protein PNS1 (554 aa).

Low complexity-rich tracts occupy residues 1 to 19 and 27 to 45; these read MSGPQYGAQPGGYYNNNNN and SYQMNPMPTDGNYGQQPQY. The segment at 1-90 is disordered; the sequence is MSGPQYGAQP…TDGYGGPPPS (90 aa). Topologically, residues 1 to 105 are cytoplasmic; sequence MSGPQYGAQP…KVQKPKYNDW (105 aa). The segment covering 68–90 has biased composition (pro residues); it reads PQGPPPNGSKPPPTDGYGGPPPS. The helical transmembrane segment at 106–126 threads the bilayer; it reads WAGLLFLATVAGFVAVSAISI. At 127–153 the chain is on the extracellular side; that stretch reads HGYADNRSQNNGSLNGQRNTFGLTTHT. N-linked (GlcNAc...) asparagine glycosylation is found at asparagine 132 and asparagine 137. A helical membrane pass occupies residues 154 to 174; it reads IYLFVWVLICAIVLSYAYMWM. Over 175–181 the chain is Cytoplasmic; it reads ARKFTKQ. The chain crosses the membrane as a helical span at residues 182–202; that stretch reads FIYATGILNIVMGLVTALYML. Residues 203-206 lie on the Extracellular side of the membrane; it reads SRKY. Residues 207-227 traverse the membrane as a helical segment; it reads WSGGIVFLIFVVLQALFFWSC. Topologically, residues 228–255 are cytoplasmic; it reads RSRIPFSTLMLQTAIDVSKVHGHVYLVS. Residues 256 to 276 form a helical membrane-spanning segment; that stretch reads AVGGVIGTLFAAYWAITLVAV. The Extracellular segment spans residues 277–297; the sequence is YVKFEPDPNNAACRNAGGCSS. A helical membrane pass occupies residues 298-318; the sequence is GKVIGLIVFITFAGYWISEWL. The Cytoplasmic portion of the chain corresponds to 319–352; the sequence is KNTIHTTVAGIYGSWYFNSRNYPTKVTRGALKRS. A helical membrane pass occupies residues 353–373; the sequence is LTYSFGSISLGSLFIAIINLI. Residues 374–389 are Extracellular-facing; sequence RQLAQAAQQNAAQEGD. The helical transmembrane segment at 390–410 threads the bilayer; sequence ILGTILWCIFGCLIGILDWLV. Over 411–451 the chain is Cytoplasmic; that stretch reads EFINRYAFCHIALYGKAYFAAAKDTWKMVKDRGIDALINEC. Residues 452-472 traverse the membrane as a helical segment; that stretch reads LIGPVLTFGATFVAYACGLIA. Over 473-487 the chain is Extracellular; sequence YLYMVYTKPAYNDGG. Residues 488-508 form a helical membrane-spanning segment; that stretch reads GFTPVVVAFAFLIGLQVCNVF. Residues 509–554 are Cytoplasmic-facing; the sequence is TTPLTSGIDTIFVAMAWDPEVLMRDHPDLYHRMVQVYPHVQEAIHA.

This sequence belongs to the CTL (choline transporter-like) family.

The protein resides in the cell membrane. Probably involved in transport through the plasma membrane. The sequence is that of Protein PNS1 (pns-1) from Neurospora crassa (strain ATCC 24698 / 74-OR23-1A / CBS 708.71 / DSM 1257 / FGSC 987).